We begin with the raw amino-acid sequence, 226 residues long: Hand transcription factor 1 (226 aa).

Over residues 1–15 the composition is skewed to polar residues; sequence MVKSTTAGNNAVSSL. The segment at 1-35 is disordered; the sequence is MVKSTTAGNNAVSSLESTDSKKSRKEKSREKEHRR. Residues 23–36 form a basic motif region; that stretch reads SRKEKSREKEHRRA. A bHLH domain is found at 23 to 77; it reads SRKEKSREKEHRRAQCINSAFEILQQHIPYLKSEERKSLPKIKTLRLAMQYIDHL. Positions 37-77 are helix-loop-helix motif; the sequence is QCINSAFEILQQHIPYLKSEERKSLPKIKTLRLAMQYIDHL.

The protein localises to the nucleus. Probable transcription factor which regulates early embryonic myogenesis, in cooperation with transcription factors unc-120 and hlh-1. Involved in controlling the number and position of somatic gonadal precursor cells (SGPs) in the gonadal primordium, and embryonic body shape. In Caenorhabditis elegans, this protein is Hand transcription factor 1.